Reading from the N-terminus, the 248-residue chain is MRFPTPLIEGRLVRRYKRFLADVTLADGTMVTAHCANPGAMLGLNAEGFRVLLSPSTNPSRKLGYSWELVEAELPGGLQWVGINTARPNALVAEAFRENKLTPLIGYETLRPEVAYGKASRVDFLTSGGGLAPCHVEVKNCHLMRQAGLAEFPDCKAARSARHMEELAGVVTAGGRAMLIVVIQMRAGAFDVARDIDPVFDRALRMALEVGVEAYAYTCAVGPEGVAIDTPVPILTPGATLQPARTSG.

The protein belongs to the SfsA family.

The polypeptide is Sugar fermentation stimulation protein homolog (Methylorubrum extorquens (strain PA1) (Methylobacterium extorquens)).